The primary structure comprises 508 residues: Bifunctional purine biosynthesis protein PurH (508 aa).

One can recognise an MGS-like domain in the interval 1-145; the sequence is MTKRALISVS…KNHQYVTVIV (145 aa).

It belongs to the PurH family.

The enzyme catalyses (6R)-10-formyltetrahydrofolate + 5-amino-1-(5-phospho-beta-D-ribosyl)imidazole-4-carboxamide = 5-formamido-1-(5-phospho-D-ribosyl)imidazole-4-carboxamide + (6S)-5,6,7,8-tetrahydrofolate. The catalysed reaction is IMP + H2O = 5-formamido-1-(5-phospho-D-ribosyl)imidazole-4-carboxamide. It participates in purine metabolism; IMP biosynthesis via de novo pathway; 5-formamido-1-(5-phospho-D-ribosyl)imidazole-4-carboxamide from 5-amino-1-(5-phospho-D-ribosyl)imidazole-4-carboxamide (10-formyl THF route): step 1/1. The protein operates within purine metabolism; IMP biosynthesis via de novo pathway; IMP from 5-formamido-1-(5-phospho-D-ribosyl)imidazole-4-carboxamide: step 1/1. The polypeptide is Bifunctional purine biosynthesis protein PurH (Lysinibacillus sphaericus (strain C3-41)).